The following is a 183-amino-acid chain: Ribosome-recycling factor (183 aa).

It belongs to the RRF family.

The protein resides in the cytoplasm. In terms of biological role, responsible for the release of ribosomes from messenger RNA at the termination of protein biosynthesis. May increase the efficiency of translation by recycling ribosomes from one round of translation to another. The sequence is that of Ribosome-recycling factor from Mycoplasmoides gallisepticum (strain R(low / passage 15 / clone 2)) (Mycoplasma gallisepticum).